The primary structure comprises 388 residues: Flap endonuclease 1 (388 aa).

The N-domain stretch occupies residues 1–104 (MGILGLSKLI…GELAKRAERR (104 aa)). Residue Asp34 participates in Mg(2+) binding. The DNA site is built by Arg47 and Arg70. Residues Asp86, Glu158, Glu160, Asp179, and Asp181 each coordinate Mg(2+). The I-domain stretch occupies residues 122 to 253 (EIEKFNRRLV…KRAIELINSY (132 aa)). Position 158 (Glu158) interacts with DNA. Residues Gly231 and Asp233 each coordinate DNA. Asp233 is a binding site for Mg(2+). An interaction with PCNA region spans residues 336-344 (TQVRLDSFF). A disordered region spans residues 355-388 (AAAKRKAEEAKKSANNKKAKIGGGGGAGRGRRPK).

It belongs to the XPG/RAD2 endonuclease family. FEN1 subfamily. In terms of assembly, interacts with PCNA. Three molecules of FEN1 bind to one PCNA trimer with each molecule binding to one PCNA monomer. PCNA stimulates the nuclease activity without altering cleavage specificity. Mg(2+) is required as a cofactor. In terms of processing, phosphorylated. Phosphorylation upon DNA damage induces relocalization to the nuclear plasma.

It localises to the nucleus. Its subcellular location is the nucleolus. The protein resides in the nucleoplasm. The protein localises to the mitochondrion. Structure-specific nuclease with 5'-flap endonuclease and 5'-3' exonuclease activities involved in DNA replication and repair. During DNA replication, cleaves the 5'-overhanging flap structure that is generated by displacement synthesis when DNA polymerase encounters the 5'-end of a downstream Okazaki fragment. It enters the flap from the 5'-end and then tracks to cleave the flap base, leaving a nick for ligation. Also involved in the long patch base excision repair (LP-BER) pathway, by cleaving within the apurinic/apyrimidinic (AP) site-terminated flap. Acts as a genome stabilization factor that prevents flaps from equilibrating into structures that lead to duplications and deletions. Also possesses 5'-3' exonuclease activity on nicked or gapped double-stranded DNA, and exhibits RNase H activity. Also involved in replication and repair of rDNA and in repairing mitochondrial DNA. The protein is Flap endonuclease 1 of Drosophila willistoni (Fruit fly).